A 1154-amino-acid polypeptide reads, in one-letter code: Voltage-gated inwardly rectifying potassium channel KCNH2 (1154 aa).

Topologically, residues 1-403 (MPVRRGHVAP…RIHRWTILHY (403 aa)) are cytoplasmic. The PAS domain occupies 41–70 (VIYCNDGFCELCGYSRAEVMQRPCTCDFLH). A PAC domain is found at 92–144 (RKVEIAFYRKDGSCFLCLVDVVPVKNEDGAVIMFILNFEVVMEKDMVGSPARD). The segment at 233–312 (ALVGSGSPPA…ASTGAMHPLR (80 aa)) is disordered. At serine 239 the chain carries Phosphoserine. The segment covering 258–269 (PDGSGSSCSLAR) has biased composition (polar residues). Serine 283, serine 284, serine 320, and serine 351 each carry phosphoserine. A helical membrane pass occupies residues 404–424 (SPFKAVWDWLILLLVIYTAVF). At 425 to 450 (TPYSAAFLLKETEEGSQAPDCGYACQ) the chain is on the extracellular side. A helical transmembrane segment spans residues 451–471 (PLAVVDLIVDIMFIVDILINF). The Cytoplasmic portion of the chain corresponds to 472–495 (RTTYVNANEEVVSHPGRIAVHYFK). The helical transmembrane segment at 496-516 (GWFLIDMVAAIPFDLLIFGSG) threads the bilayer. Residues 517-520 (SEEL) are Extracellular-facing. A helical; Voltage-sensor transmembrane segment spans residues 521-541 (IGLLKTARLLRLVRVARKLDR). Over 542-547 (YSEYGA) the chain is Cytoplasmic. The helical transmembrane segment at 548-568 (AVLFLLMCTFALIAHWLACIW) threads the bilayer. Residues 569 to 611 (YAIGNMEQPNMDSHIGWLHNLGDQIGKPYNSSGLGGPSIKDKY) are Extracellular-facing. The pore-forming intramembrane region spans 612-632 (VTALYFTFSSLTSVGFGNVSP). Positions 624-629 (SVGFGN) match the Selectivity filter motif. Topologically, residues 633–638 (NTNSEK) are extracellular. A helical transmembrane segment spans residues 639–659 (IFSICVMLIGSLMYASIFGNV). The Cytoplasmic portion of the chain corresponds to 660–1154 (SAIIQRLYSG…LHRHGSDPGS (495 aa)). Residues 742–842 (PFRGATKGCL…IHRDDLLEVL (101 aa)) form a cNMP-binding domain region. The tract at residues 870-985 (GSPGSTELEG…DVEKSSDTCN (116 aa)) is disordered. Residues serine 871 and serine 874 each carry the phosphoserine modification. Positions 883-892 (RQRKRKLSFR) are enriched in basic residues. Residues 916–927 (GPSGRGQQGGPW) show a composition bias toward gly residues. A compositionally biased stretch (low complexity) spans 928-939 (GESLSSGPSSPE). Position 1014 is an omega-N-methylarginine (arginine 1014). Positions 1037-1064 (RGDVESRLDALQRQLNRLETRLSADMAT) form a coiled coil. The disordered stretch occupies residues 1125-1154 (DGPARRLSLPGQLGALTSQPLHRHGSDPGS). Serine 1132 is subject to Phosphoserine.

It belongs to the potassium channel family. H (Eag) (TC 1.A.1.20) subfamily. Kv11.1/KCNH2 sub-subfamily. In terms of assembly, the potassium channel is probably composed of a homo- or heterotetrameric complex of pore-forming alpha subunits that can associate with modulating beta subunits. Interacts with DNAJB12 and DNAJB14; chaperones DNAJB12 and DNAJB14 promote tetramerization. Heteromultimer with KCNH6/ERG2 and KCNH7/ERG3. Interacts with ALG10B. Forms a stable complex with KCNE1 or KCNE2, and that this heteromultimerization regulates Inward rectifier potassium channel activity. Interacts with CANX. The core-glycosylated, but not the fully glycosylated form interacts with RNF207. Interacts with NDFIP1 and NDFIP2; this interaction decreases the cell membrane expression by targeting KCNH2, through interaction with NEDD4L, for the degradation through the multivesicular bodies (MVBs)-lysosomal pathway. In terms of processing, phosphorylated on serine and threonine residues. Phosphorylation by PKA inhibits ion conduction.

Its subcellular location is the cell membrane. The enzyme catalyses K(+)(in) = K(+)(out). Functionally, pore-forming (alpha) subunit of voltage-gated inwardly rectifying potassium channel. Characterized by unusual gating kinetics by producing relatively small outward currents during membrane depolarization and large inward currents during subsequent repolarization which reflect a rapid inactivation during depolarization and quick recovery from inactivation but slow deactivation (closing) during repolarization. Channel properties are modulated by cAMP and subunit assembly. Forms a stable complex with KCNE1 or KCNE2, and that this heteromultimerization regulates inward rectifier potassium channel activity. This chain is Voltage-gated inwardly rectifying potassium channel KCNH2, found in Sus scrofa (Pig).